Reading from the N-terminus, the 707-residue chain is Caprin-1 (707 aa).

Low complexity-rich tracts occupy residues 1–15 (MPSATSHSGSGSKSS) and 22–43 (GSSGSEAAAGAAAPASQHPATG). The tract at residues 1–48 (MPSATSHSGSGSKSSGPPPPSGSSGSEAAAGAAAPASQHPATGTGAVQ) is disordered. Pro-2 carries the post-translational modification N-acetylproline. Ser-10 bears the Phosphoserine mark. Residues 58–92 (VIDKKLRNLEKKKGKLDDYQERMNKGERLNQDQLD) are a coiled coil. Ser-113 is subject to Phosphoserine. Residues 123 to 151 (KTIKKTARREQLMREEAEQKRLKTVLELQ) are a coiled coil. Omega-N-methylarginine is present on Arg-163. Residues 325–347 (LQQQPQAASPSVPEPHSLTPVAQ) form a disordered region. Positions 326–335 (QQQPQAASPS) are enriched in low complexity. Ser-333 and Ser-341 each carry phosphoserine. Residues 358–379 (QDLMAQMQGPYNFIQDSMLDFE) form a G3BP1-binding region. Disordered regions lie at residues 412 to 443 (ESRLAQSNQVPVQPEATQVPLVSSTSEGYTAS), 523 to 558 (PVPPVNEPETLKQQSQYQASYNQSFSSQPHQVEQTE), and 570 to 620 (TYHG…RGLM). Positions 431-443 (PLVSSTSEGYTAS) are enriched in polar residues. The span at 535 to 558 (QQSQYQASYNQSFSSQPHQVEQTE) shows a compositional bias: low complexity. A compositionally biased stretch (polar residues) spans 572-603 (HGSQDQPHQVPGNHQQPPQQSTGFPRSSQPYY). At Tyr-623 the chain carries Phosphotyrosine. Omega-N-methylarginine is present on residues Arg-624 and Arg-631. Tyr-634 and Tyr-637 each carry phosphotyrosine. Position 638 is an omega-N-methylarginine (Arg-638). The segment covering 641-655 (FSNTPNSGYTQSQFN) has biased composition (polar residues). Residues 641 to 707 (FSNTPNSGYT…MPQMNTQQVN (67 aa)) form a disordered region. 2 O-linked (GlcNAc) serine glycosylation sites follow: Ser-642 and Ser-647. Residues Tyr-649, Tyr-660, Tyr-663, and Tyr-668 each carry the phosphotyrosine modification. Low complexity-rich tracts occupy residues 674-684 (RGSGQSGPRGA) and 695-707 (NRGMPQMNTQQVN). Arg-696 is subject to Asymmetric dimethylarginine; alternate. The residue at position 696 (Arg-696) is an Omega-N-methylarginine; alternate.

It belongs to the caprin family. As to quaternary structure, may form homomultimers. Interacts with G3BP1; interaction is direct and promotes stress granule formation. Interacts with G3BP2; interaction is direct and promotes stress granule formation. Interacts with PQBP1. Interacts with DDX3X. Interacts (when phosphorylated by EPHA4) with FMR1; interaction with FMR1 promotes formation of a membraneless compartment. Tyrosine phosphorylation by EPHA4 promotes interaction with FMR1 and liquid-liquid phase separation (LLPS) for the formation of a membraneless compartment that concentrates mRNAs with associated regulatory factors. In terms of processing, O-glycosylated (O-GlcNAcylated), in a cell cycle-dependent manner. O-glycosylation by OGT inhibit ability to undergo liquid-liquid phase separation (LLPS). Expressed in hippocampal and neocortical pyramidal neurons, but not in Purkinje cells.

Its subcellular location is the cytoplasm. The protein localises to the cytoplasmic ribonucleoprotein granule. It is found in the cytosol. The protein resides in the cell projection. It localises to the dendrite. Its subcellular location is the lamellipodium. Ability to mediate liquid-liquid phase separation is regulated by ATP: moderate concentrations of ATP enhance phase separation, whereas high concentrations of ATP lead to inhibition of phase separation. In terms of biological role, mRNA-binding protein that acts as a regulator of mRNAs transport, translation and/or stability, and which is involved in neurogenesis, synaptic plasticity in neurons and cell proliferation and migration in multiple cell types. Plays an essential role in cytoplasmic stress granule formation. Acts as an mRNA regulator by mediating formation of some phase-separated membraneless compartment: undergoes liquid-liquid phase separation upon binding to target mRNAs, leading to assemble mRNAs into cytoplasmic ribonucleoprotein granules that concentrate mRNAs with associated regulatory factors. Undergoes liquid-liquid phase separation following phosphorylation and interaction with FMR1, promoting formation of cytoplasmic ribonucleoprotein granules that concentrate mRNAs with factors that inhibit translation and mediate deadenylation of target mRNAs. In these cytoplasmic ribonucleoprotein granules, CAPRIN1 mediates recruitment of CNOT7 deadenylase, leading to mRNA deadenylation and degradation. Binds directly and selectively to MYC and CCND2 mRNAs. In neuronal cells, directly binds to several mRNAs associated with RNA granules, including BDNF, CAMK2A, CREB1, MAP2, NTRK2 mRNAs, as well as to GRIN1 and KPNB1 mRNAs, but not to rRNAs. This is Caprin-1 (Caprin1) from Rattus norvegicus (Rat).